The sequence spans 554 residues: MNQLAMVNTTITRPLANYHSSVWGNYFLSYTPQLTEISSQEKRELEELKEKVRQMLVETPDNSTQKLVLIDTIQRLGVAYHFENHIKISIQNIFDEFEKNKNKDNDDDLCVVALRFRLVRGQRHYMSSDVFTRFTNDDGKFKETLTKDVQGLLNLYEATHLRVHGEEILEEALSFTVTHLKSMSPKLDNSLKAQVSEALFQPIHTNIPRVVARKYIRIYENIESHDDLLLKFAKLDFHILQKMHQRELSELTRWWKDLDHSNKYPYARDKLVECYFWAIGVYFGPQYKRARRTLTKLIVIITITDDLYDAYATYDELVPYTNAVERCEISAMHSISPYMRPLYQVFLDYFDEMEEELTKDGKAHYVYYAKIETNKWIKSYLKEAEWLKNDIIPKCEEYKRNATITISNQMNLITCLIVAGEFISKETFEWMINESLIAPASSLINRLKDDIIGHEHEQQREHGASFIECYVKEYRASKQEAYVEARRQITNAWKDINTDYLHATQVPTFVLEPALNLSRLVDILQEDDFTDSQNFLKDTITLLFVDSVNSTSCG.

Residues aspartate 305, aspartate 309, aspartate 449, and glutamate 457 each coordinate Mg(2+). The short motif at 305-309 (DDLYD) is the DDXXD motif element.

Belongs to the terpene synthase family. Tpsa subfamily. The cofactor is Mg(2+). Mn(2+) serves as cofactor.

The catalysed reaction is (2E,6E)-farnesyl diphosphate = (E)-gamma-bisabolene + diphosphate. It catalyses the reaction (2Z,6Z)-farnesyl diphosphate = (E)-gamma-bisabolene + diphosphate. The enzyme catalyses (2Z,6Z)-farnesyl diphosphate = (E)-alpha-bisabolene + diphosphate. It carries out the reaction (2Z,6Z)-farnesyl diphosphate = (Z)-beta-farnesene + diphosphate. The catalysed reaction is (2E,6E)-farnesyl diphosphate = (E)-beta-farnesene + diphosphate. It catalyses the reaction (2E,6E)-farnesyl diphosphate = (+)-thujopsene + diphosphate. The enzyme catalyses (2Z,6Z)-farnesyl diphosphate = (E)-beta-farnesene + diphosphate. It carries out the reaction (2E,6E)-farnesyl diphosphate = (Z)-beta-farnesene + diphosphate. The catalysed reaction is (2Z,6Z)-farnesyl diphosphate = beta-acoradiene + diphosphate. It catalyses the reaction (2Z,6Z)-farnesyl diphosphate = alpha-acoradiene + diphosphate. The enzyme catalyses (2Z,6Z)-farnesyl diphosphate = beta-bisabolene + diphosphate. It carries out the reaction (2E,6E)-farnesyl diphosphate = (-)-alpha-cedrene + diphosphate. The catalysed reaction is (2E,6E)-farnesyl diphosphate = beta-bisabolene + diphosphate. It catalyses the reaction (2E,6E)-farnesyl diphosphate = beta-acoradiene + diphosphate. The enzyme catalyses (2Z,6Z)-farnesyl diphosphate = (-)-alpha-cedrene + diphosphate. It carries out the reaction (2E)-geranyl diphosphate = terpinolene + diphosphate. The catalysed reaction is (2E)-geranyl diphosphate = limonene + diphosphate. It catalyses the reaction (2E)-geranyl diphosphate = beta-myrcene + diphosphate. Its pathway is secondary metabolite biosynthesis; terpenoid biosynthesis. In terms of biological role, sesquiterpene synthase involved in the biosynthesis of volatile compounds. Mediates the conversion of (2E,6E)-farnesyl diphosphate ((EE)-FPP) into (+)-thujopsene, beta-bisabolene, alpha-cederene, beta-acoradiene, (E)-gamma-bisabolene, (Z)-alpha-bisabolene, (Z)-beta-farnesene and (E)-beta-farnesene, and of (2Z,6Z)-farnesyl diphosphate ((ZZ)-FPP) into (E)-gamma-bisabolene, (E)-alpha-bisabolene, (E)-beta-farnesene, (Z)-beta-farnesene, beta-bisabolene, beta-acoradiene and alpha-acoradiene. Can act with a low efficiency as a monoterpene synthase with geranyl diphosphate (GPP) as substrate, thus producing beta-myrcene, limonene and terpinolene. This chain is Sesquiterpene synthase 14b, found in Solanum habrochaites (Wild tomato).